A 574-amino-acid chain; its full sequence is Potassium-transporting ATPase potassium-binding subunit (574 aa).

The next 10 helical transmembrane spans lie at 7-27, 65-85, 136-156, 175-195, 264-284, 292-312, 390-410, 427-447, 494-514, and 534-554; these read IELGLFIALLAVLNIPLGTHL, IEYAVGLLCFNFVGILVSYLI, FGLAVPNFTSAATGIAAAAAL, LIRIHYYLLLPLSLFIAIILL, FVEMLSIFLIPSALTYYFGLS, WSIWLTMTFCFLILTLSCFIF, GLYGILLFVILSVFLFGLMIG, MAVLALMIQYVLILGLSALAL, LLLGVAMFLGRYFVLIPILAI, and GWLFIFVLGATIFLLAALNFF.

The protein belongs to the KdpA family. In terms of assembly, the system is composed of three essential subunits: KdpA, KdpB and KdpC.

The protein localises to the cell inner membrane. In terms of biological role, part of the high-affinity ATP-driven potassium transport (or Kdp) system, which catalyzes the hydrolysis of ATP coupled with the electrogenic transport of potassium into the cytoplasm. This subunit binds the periplasmic potassium ions and delivers the ions to the membrane domain of KdpB through an intramembrane tunnel. The sequence is that of Potassium-transporting ATPase potassium-binding subunit from Methylacidiphilum infernorum (isolate V4) (Methylokorus infernorum (strain V4)).